Here is a 440-residue protein sequence, read N- to C-terminus: 2-methylisoborneol synthase (440 aa).

Disordered regions lie at residues Met1–Ala33 and Leu46–Gly74. Pro residues-rich tracts occupy residues Thr9 to Val29 and Val50 to Pro63. Positions 197, 198, 202, 345, 349, and 353 each coordinate Mg(2+).

The protein belongs to the terpene synthase family. 2-methylisoborneol synthase subfamily. Mg(2+) serves as cofactor.

It catalyses the reaction (E)-2-methylgeranyl diphosphate + H2O = 2-methylisoborneol + diphosphate. Catalyzes the cyclization of 2-methylgeranyl diphosphate (2-MeGPP) to 2-methylisoborneol (2-MIB), which likely involves the intermediacy of 2-methyllinalyl diphosphate. Is also able to catalyze the cyclization of geranyl diphosphate (GPP), albeit with much lower efficiency, leading to the formation of a complex mixture of cyclic monoterpenes, consisting of alpha-pinene (6%), beta-pinene (23%), limonene (32%), gamma-terpinene (29%), and delta-terpinene (10%). The protein is 2-methylisoborneol synthase of Streptomyces coelicolor (strain ATCC BAA-471 / A3(2) / M145).